The chain runs to 178 residues: Large ribosomal subunit protein uL6 (178 aa).

This sequence belongs to the universal ribosomal protein uL6 family. As to quaternary structure, part of the 50S ribosomal subunit.

This protein binds to the 23S rRNA, and is important in its secondary structure. It is located near the subunit interface in the base of the L7/L12 stalk, and near the tRNA binding site of the peptidyltransferase center. The protein is Large ribosomal subunit protein uL6 of Corynebacterium aurimucosum (strain ATCC 700975 / DSM 44827 / CIP 107346 / CN-1) (Corynebacterium nigricans).